The chain runs to 133 residues: Large ribosomal subunit protein uL16 (133 aa).

The protein belongs to the universal ribosomal protein uL16 family. Part of the 50S ribosomal subunit.

In terms of biological role, binds 23S rRNA and is also seen to make contacts with the A and possibly P site tRNAs. The protein is Large ribosomal subunit protein uL16 of Blochmanniella floridana.